A 212-amino-acid polypeptide reads, in one-letter code: ATP-dependent dethiobiotin synthetase BioD (212 aa).

Residue 12–17 (DCGKTF) participates in ATP binding. Residue T16 coordinates Mg(2+). Residue K33 is part of the active site. S37 contributes to the substrate binding site. ATP contacts are provided by residues D50, 110–113 (EGAG), and 170–171 (NC). Mg(2+) contacts are provided by D50 and E110.

Belongs to the dethiobiotin synthetase family. In terms of assembly, homodimer. Mg(2+) serves as cofactor.

It localises to the cytoplasm. It catalyses the reaction (7R,8S)-7,8-diammoniononanoate + CO2 + ATP = (4R,5S)-dethiobiotin + ADP + phosphate + 3 H(+). The protein operates within cofactor biosynthesis; biotin biosynthesis; biotin from 7,8-diaminononanoate: step 1/2. In terms of biological role, catalyzes a mechanistically unusual reaction, the ATP-dependent insertion of CO2 between the N7 and N8 nitrogen atoms of 7,8-diaminopelargonic acid (DAPA, also called 7,8-diammoniononanoate) to form a ureido ring. The sequence is that of ATP-dependent dethiobiotin synthetase BioD from Legionella pneumophila (strain Corby).